Reading from the N-terminus, the 159-residue chain is Ribosomal RNA large subunit methyltransferase H (159 aa).

S-adenosyl-L-methionine-binding positions include Leu-76, Gly-108, and Phe-127–Phe-132.

This sequence belongs to the RNA methyltransferase RlmH family. Homodimer.

The protein resides in the cytoplasm. The enzyme catalyses pseudouridine(1915) in 23S rRNA + S-adenosyl-L-methionine = N(3)-methylpseudouridine(1915) in 23S rRNA + S-adenosyl-L-homocysteine + H(+). Functionally, specifically methylates the pseudouridine at position 1915 (m3Psi1915) in 23S rRNA. The sequence is that of Ribosomal RNA large subunit methyltransferase H from Bacillus licheniformis (strain ATCC 14580 / DSM 13 / JCM 2505 / CCUG 7422 / NBRC 12200 / NCIMB 9375 / NCTC 10341 / NRRL NRS-1264 / Gibson 46).